The following is a 347-amino-acid chain: Phosphate acyltransferase (347 aa).

It belongs to the PlsX family. In terms of assembly, homodimer. Probably interacts with PlsY.

The protein resides in the cytoplasm. It catalyses the reaction a fatty acyl-[ACP] + phosphate = an acyl phosphate + holo-[ACP]. It participates in lipid metabolism; phospholipid metabolism. Functionally, catalyzes the reversible formation of acyl-phosphate (acyl-PO(4)) from acyl-[acyl-carrier-protein] (acyl-ACP). This enzyme utilizes acyl-ACP as fatty acyl donor, but not acyl-CoA. In Dehalococcoides mccartyi (strain ATCC BAA-2100 / JCM 16839 / KCTC 5957 / BAV1), this protein is Phosphate acyltransferase.